We begin with the raw amino-acid sequence, 183 residues long: Ubiquitin-conjugating enzyme E2 H (183 aa).

A UBC core domain is found at 1–150; it reads MSSPSPGKRR…IKEYIQKYAT (150 aa). Lys60 bears the N6-acetyllysine mark. Residue Cys87 is the Glycyl thioester intermediate of the active site. A disordered region spans residues 152–183; it reads EALKEQEEGTGDSSSESSMSDFSEDEAQDMEL. Over residues 163–172 the composition is skewed to low complexity; it reads DSSSESSMSD. Positions 173-183 are enriched in acidic residues; that stretch reads FSEDEAQDMEL.

It belongs to the ubiquitin-conjugating enzyme family. As to quaternary structure, interacts with MAEA and WDR26, components of the CTLH complex that contains GID4, RANBP9 and/or RANBP10, MKLN1, MAEA, RMND5A (or alternatively its paralog RMND5B), GID8, ARMC8, WDR26 and YPEL5. In terms of processing, autoubiquitinated in vitro in the presence of NEDD4L.

It catalyses the reaction S-ubiquitinyl-[E1 ubiquitin-activating enzyme]-L-cysteine + [E2 ubiquitin-conjugating enzyme]-L-cysteine = [E1 ubiquitin-activating enzyme]-L-cysteine + S-ubiquitinyl-[E2 ubiquitin-conjugating enzyme]-L-cysteine.. The catalysed reaction is S-ubiquitinyl-[E1 ubiquitin-activating enzyme]-L-cysteine + [acceptor protein]-L-lysine = [E1 ubiquitin-activating enzyme]-L-cysteine + N(6)-monoubiquitinyl-[acceptor protein]-L-lysine.. Its pathway is protein modification; protein ubiquitination. Functionally, accepts ubiquitin from the E1 complex and catalyzes its covalent attachment to other proteins. E2 ubiquitin conjugating enzyme that transfers ubiquitin to MAEA, a core component of the CTLH E3 ubiquitin-protein ligase complex. In vitro catalyzes 'Lys-11'- and 'Lys-48'-linked polyubiquitination. Capable, in vitro, to ubiquitinate histone H2A. This chain is Ubiquitin-conjugating enzyme E2 H (UBE2H), found in Homo sapiens (Human).